A 339-amino-acid polypeptide reads, in one-letter code: DNA-directed RNA polymerase subunit alpha (339 aa).

The interval methionine 1 to glutamate 233 is alpha N-terminal domain (alpha-NTD). An alpha C-terminal domain (alpha-CTD) region spans residues lysine 264–phenylalanine 339.

It belongs to the RNA polymerase alpha chain family. In plastids the minimal PEP RNA polymerase catalytic core is composed of four subunits: alpha, beta, beta', and beta''. When a (nuclear-encoded) sigma factor is associated with the core the holoenzyme is formed, which can initiate transcription.

It is found in the plastid. It localises to the chloroplast. It catalyses the reaction RNA(n) + a ribonucleoside 5'-triphosphate = RNA(n+1) + diphosphate. Functionally, DNA-dependent RNA polymerase catalyzes the transcription of DNA into RNA using the four ribonucleoside triphosphates as substrates. In Crithopsis delileana, this protein is DNA-directed RNA polymerase subunit alpha.